Here is a 594-residue protein sequence, read N- to C-terminus: Adenine deaminase 1 (594 aa).

This sequence belongs to the metallo-dependent hydrolases superfamily. Adenine deaminase family. It depends on Mn(2+) as a cofactor.

It carries out the reaction adenine + H2O + H(+) = hypoxanthine + NH4(+). The chain is Adenine deaminase 1 from Jannaschia sp. (strain CCS1).